Consider the following 73-residue polypeptide: UPF0154 protein PEPE_0872 (73 aa).

Residues 5–25 (IWIMIVIIALLVGAVGGFFFA) form a helical membrane-spanning segment.

Belongs to the UPF0154 family.

Its subcellular location is the cell membrane. This is UPF0154 protein PEPE_0872 from Pediococcus pentosaceus (strain ATCC 25745 / CCUG 21536 / LMG 10740 / 183-1w).